The following is a 1404-amino-acid chain: ABC transporter G family member 47 (1404 aa).

The region spanning 156–423 (GNALHITRKK…FQSIGFKCPE (268 aa)) is the ABC transporter 1 domain. Residue 189 to 196 (GPPGSGKT) coordinates ATP. Residues 501–714 (ELLQANIDRE…ALNTLAVNEF (214 aa)) enclose the ABC transmembrane type-2 1 domain. 7 helical membrane passes run 519–539 (FLYI…MTVF), 565–585 (MIMF…PVFF), 607–627 (TPIS…VIGF), 638–658 (FLAL…IASL), 663–683 (VVAS…SGFI), 692–712 (WWIW…LAVN), and 751–771 (VGAL…CLIF). The ABC transporter 2 domain occupies 808–1059 (ITFEDIKYSI…ELIRYFEAIE (252 aa)). 852 to 859 (GVSGAGKT) contacts ATP. The 215-residue stretch at 1132–1346 (TQCLACLWKQ…TLNGLVTSQF (215 aa)) folds into the ABC transmembrane type-2 2 domain. A run of 7 helical transmembrane segments spans residues 1152–1172 (IAVK…MFWG), 1183–1199 (LFSA…TMGV), 1239–1259 (LPYI…MIGY), 1266–1286 (FFWY…YGMM), 1298–1318 (TVVS…LIPL), 1321–1341 (IPIW…LNGL), and 1373–1393 (LLWV…FLFG).

The protein belongs to the ABC transporter superfamily. ABCG family. PDR (TC 3.A.1.205) subfamily.

Its subcellular location is the membrane. Functionally, may be a general defense protein. The sequence is that of ABC transporter G family member 47 from Oryza sativa subsp. japonica (Rice).